The following is a 241-amino-acid chain: Adapter protein MecA (241 aa).

A disordered region spans residues 115-141 (TDSNDKNNDDSSYMSDGNPADLNGYAN).

It belongs to the MecA family. As to quaternary structure, homodimer.

Its function is as follows. Enables the recognition and targeting of unfolded and aggregated proteins to the ClpC protease or to other proteins involved in proteolysis. This chain is Adapter protein MecA, found in Pediococcus pentosaceus (strain ATCC 25745 / CCUG 21536 / LMG 10740 / 183-1w).